The primary structure comprises 32 residues: DNA-binding protein HU (32 aa).

It belongs to the bacterial histone-like protein family.

Functionally, histone-like DNA-binding protein which is capable of wrapping DNA to stabilize it, and thus to prevent its denaturation under extreme environmental conditions. This is DNA-binding protein HU (hup) from Synechocystis sp. (strain PCC 6701).